Consider the following 302-residue polypeptide: ATP synthase gamma chain (302 aa).

Belongs to the ATPase gamma chain family. In terms of assembly, F-type ATPases have 2 components, CF(1) - the catalytic core - and CF(0) - the membrane proton channel. CF(1) has five subunits: alpha(3), beta(3), gamma(1), delta(1), epsilon(1). CF(0) has three main subunits: a, b and c.

The protein resides in the cell membrane. Functionally, produces ATP from ADP in the presence of a proton gradient across the membrane. The gamma chain is believed to be important in regulating ATPase activity and the flow of protons through the CF(0) complex. The sequence is that of ATP synthase gamma chain from Kineococcus radiotolerans (strain ATCC BAA-149 / DSM 14245 / SRS30216).